Here is a 232-residue protein sequence, read N- to C-terminus: PsbP domain-containing protein 2, chloroplastic (232 aa).

A chloroplast-targeting transit peptide spans 1-34 (MWSQSFLGSAPKLCLFSSSLPPFSHHKIHKFFCF). The N-terminal 37 residues, 35–71 (AQNPSSTVSINLSKRHLNLSILTLFFNGFLLDNKAKS), are a transit peptide targeting the thylakoid.

This sequence belongs to the PsbP family.

It is found in the plastid. The protein resides in the chloroplast thylakoid lumen. The protein is PsbP domain-containing protein 2, chloroplastic (PPD2) of Arabidopsis thaliana (Mouse-ear cress).